The sequence spans 398 residues: tRNA (guanine-N(7)-)-methyltransferase (398 aa).

S-adenosyl-L-methionine-binding residues include glutamate 124, glutamate 149, and aspartate 176. Aspartate 232 provides a ligand contact to substrate.

Belongs to the class I-like SAM-binding methyltransferase superfamily. TrmB family.

It catalyses the reaction guanosine(46) in tRNA + S-adenosyl-L-methionine = N(7)-methylguanosine(46) in tRNA + S-adenosyl-L-homocysteine. It participates in tRNA modification; N(7)-methylguanine-tRNA biosynthesis. Functionally, catalyzes the formation of N(7)-methylguanine at position 46 (m7G46) in tRNA. In Helicobacter acinonychis (strain Sheeba), this protein is tRNA (guanine-N(7)-)-methyltransferase.